The sequence spans 104 residues: Large ribosomal subunit protein uL23 (104 aa).

Belongs to the universal ribosomal protein uL23 family. As to quaternary structure, part of the 50S ribosomal subunit. Contacts protein L29, and trigger factor when it is bound to the ribosome.

Functionally, one of the early assembly proteins it binds 23S rRNA. One of the proteins that surrounds the polypeptide exit tunnel on the outside of the ribosome. Forms the main docking site for trigger factor binding to the ribosome. This chain is Large ribosomal subunit protein uL23, found in Polynucleobacter necessarius subsp. necessarius (strain STIR1).